The following is a 763-amino-acid chain: Phosphoglycerol transferase I (763 aa).

The next 4 membrane-spanning stretches (helical) occupy residues 1–21, 26–46, 77–97, and 108–128; these read MSELLSFALFLASVLIYAWKA, WWFAATLTVLGLFVVLNITLF, ILPGIGIVLGLAAVFGALGWI, and FGYSLLALLLALGSVDASPAF.

The protein belongs to the OpgB family.

The protein localises to the cell inner membrane. It catalyses the reaction a phosphatidylglycerol + a membrane-derived-oligosaccharide D-glucose = a 1,2-diacyl-sn-glycerol + a membrane-derived-oligosaccharide 6-(glycerophospho)-D-glucose.. The protein operates within glycan metabolism; osmoregulated periplasmic glucan (OPG) biosynthesis. Functionally, transfers a phosphoglycerol residue from phosphatidylglycerol to the membrane-bound nascent glucan backbones. This is Phosphoglycerol transferase I from Escherichia coli (strain UTI89 / UPEC).